Reading from the N-terminus, the 268-residue chain is Hemin import ATP-binding protein HmuV (268 aa).

Residues 5–241 (LKAEAASFAL…ELIADVFDVA (237 aa)) form the ABC transporter domain. An ATP-binding site is contributed by 37–44 (GPNGAGKS).

This sequence belongs to the ABC transporter superfamily. Heme (hemin) importer (TC 3.A.1.14.5) family. In terms of assembly, the complex is composed of two ATP-binding proteins (HmuV), two transmembrane proteins (HmuU) and a solute-binding protein (HmuT).

It localises to the cell inner membrane. In terms of biological role, part of the ABC transporter complex HmuTUV involved in hemin import. Responsible for energy coupling to the transport system. This chain is Hemin import ATP-binding protein HmuV, found in Rhodopseudomonas palustris (strain ATCC BAA-98 / CGA009).